The following is a 348-amino-acid chain: MSILLIDLSGQELRQEEIELLEHPLVAGLILFSRNFYDIEQIRHLIRSVRQKVKKPLLITVDQEGGRVQRFRQGLTQLPAMQSFACLLSDPQEQQEMAWRAGWQMAAEMTALDIDLSFAPVLDLGHQCKAIGDRSFHYEEKKLIELAEKFIQGMRQIGMSATGKHFPGHGHVLADSHLETPYDDRAKELIFAQDIRPFQSLIKQGLLDAVMPAHVIYTQCDNQPASGSSYWLKEVLRQQLGFQGAIFSDDLGMKGAGFMGDFVARCTQSLQAGCDLLLLCNEPEAVVQVLDRFKPQESQNKRIIRQTRLNKLFKKQRIDWQTLRTQRDWLENHKKLTALQQDWLAYKG.

Residues aspartate 62, arginine 70, arginine 134, and 164–165 (KH) contribute to the substrate site. The active-site Proton donor/acceptor is the histidine 177. Catalysis depends on aspartate 249, which acts as the Nucleophile.

This sequence belongs to the glycosyl hydrolase 3 family. NagZ subfamily.

The protein resides in the cytoplasm. It carries out the reaction Hydrolysis of terminal non-reducing N-acetyl-D-hexosamine residues in N-acetyl-beta-D-hexosaminides.. It participates in cell wall biogenesis; peptidoglycan recycling. Its function is as follows. Plays a role in peptidoglycan recycling by cleaving the terminal beta-1,4-linked N-acetylglucosamine (GlcNAc) from peptide-linked peptidoglycan fragments, giving rise to free GlcNAc, anhydro-N-acetylmuramic acid and anhydro-N-acetylmuramic acid-linked peptides. The sequence is that of Beta-hexosaminidase from Histophilus somni (strain 2336) (Haemophilus somnus).